A 215-amino-acid polypeptide reads, in one-letter code: Adenylate kinase (215 aa).

Residue 10–15 (GAGKGT) coordinates ATP. The segment at 30–59 (STGDIFRKNISENTPLGMEARSYMDKGLLV) is NMP. Residues Thr-31, Arg-36, 57-59 (LLV), 85-88 (GFPR), and Gln-92 contribute to the AMP site. Residues 126 to 163 (GRRVCTSCGGSFHIKFNPPTIDGKCNLCGSDIVQRKDD) are LID. Residue Arg-127 coordinates ATP. Zn(2+) is bound by residues Cys-130 and Cys-133. 136-137 (SF) contacts ATP. Cys-150 and Cys-153 together coordinate Zn(2+). Arg-160 and Arg-171 together coordinate AMP. Position 199 (Lys-199) interacts with ATP.

It belongs to the adenylate kinase family. As to quaternary structure, monomer.

Its subcellular location is the cytoplasm. It carries out the reaction AMP + ATP = 2 ADP. Its pathway is purine metabolism; AMP biosynthesis via salvage pathway; AMP from ADP: step 1/1. Its function is as follows. Catalyzes the reversible transfer of the terminal phosphate group between ATP and AMP. Plays an important role in cellular energy homeostasis and in adenine nucleotide metabolism. This Clostridium botulinum (strain Eklund 17B / Type B) protein is Adenylate kinase.